Reading from the N-terminus, the 239-residue chain is 2,3,4,5-tetrahydropyridine-2,6-dicarboxylate N-acetyltransferase (239 aa).

The protein belongs to the transferase hexapeptide repeat family. DapH subfamily.

It carries out the reaction (S)-2,3,4,5-tetrahydrodipicolinate + acetyl-CoA + H2O = L-2-acetamido-6-oxoheptanedioate + CoA. It participates in amino-acid biosynthesis; L-lysine biosynthesis via DAP pathway; LL-2,6-diaminopimelate from (S)-tetrahydrodipicolinate (acetylase route): step 1/3. In terms of biological role, catalyzes the transfer of an acetyl group from acetyl-CoA to tetrahydrodipicolinate. In Staphylococcus aureus (strain MRSA252), this protein is 2,3,4,5-tetrahydropyridine-2,6-dicarboxylate N-acetyltransferase.